We begin with the raw amino-acid sequence, 388 residues long: Na(+)/H(+) antiporter NhaA (388 aa).

The Cytoplasmic segment spans residues 1-11; it reads MKHLHRFFSSD. The helical transmembrane segment at 12-31 threads the bilayer; that stretch reads ASGGIILIIAAILAMIMANS. Residues 32 to 58 are Periplasmic-facing; sequence GATSGWYHDFLETPVQLRVGSLEINKN. Residues 45-58 are important for dimerization; sequence PVQLRVGSLEINKN. The helical transmembrane segment at 59-80 threads the bilayer; the sequence is MLLWINDALMAVFFLLVGLEVK. The Cytoplasmic portion of the chain corresponds to 81–96; the sequence is RELMQGSLASLRQAAF. Residues 97-116 traverse the membrane as a helical segment; the sequence is PVIAAIGGMIVPALLYLAFN. The Periplasmic segment spans residues 117–122; the sequence is YADPIT. The helical transmembrane segment at 123-130 threads the bilayer; that stretch reads REGWAIPA. At 131 to 154 the chain is on the cytoplasmic side; that stretch reads ATDIAFALGVLALLGSRVPLALKI. A helical transmembrane segment spans residues 155 to 176; it reads FLMALAIIDDLGAIIIIALFYT. At 177–180 the chain is on the periplasmic side; that stretch reads NDLS. The helical transmembrane segment at 181–200 threads the bilayer; sequence MASLGVAAVAIAVLAVLNLC. Residues 201–204 are Cytoplasmic-facing; the sequence is GARR. A helical transmembrane segment spans residues 205 to 222; it reads TGVYILVGVVLWTAVLKS. A topological domain (periplasmic) is located at residue Gly-223. The helical transmembrane segment at 224-236 threads the bilayer; that stretch reads VHATLAGVIVGFF. The Cytoplasmic segment spans residues 237-253; it reads IPLKEKHGRSPAKRLEH. Residues 254–272 traverse the membrane as a helical segment; it reads VLHPWVAYLILPLFAFANA. Over 273-286 the chain is Periplasmic; it reads GVSLQGVTLDGLTS. Residues 287–310 traverse the membrane as a helical segment; that stretch reads ILPLGIIAGLLIGKPLGISLFCWL. At 311-339 the chain is on the cytoplasmic side; that stretch reads ALRLKLAHLPEGTTYQQIMVVGILCGIGF. Residues 340-350 form a helical membrane-spanning segment; that stretch reads TMSIFIASLAF. Topologically, residues 351–357 are periplasmic; sequence GSVDPEL. The chain crosses the membrane as a helical span at residues 358 to 380; it reads INWAKLGILVGSISSAVIGYSWL. Residues 381–388 lie on the Cytoplasmic side of the membrane; sequence RVRLRPSV.

It belongs to the NhaA Na(+)/H(+) (TC 2.A.33) antiporter family. In terms of assembly, monomer. Homodimer. Under routine stress conditions, the monomeric form is fully functional. However, the dimeric form is much more efficient in conferring growth resistance under extreme stress conditions.

Its subcellular location is the cell inner membrane. It carries out the reaction Na(+)(in) + 2 H(+)(out) = Na(+)(out) + 2 H(+)(in). The enzyme catalyses Li(+)(in) + 2 H(+)(out) = Li(+)(out) + 2 H(+)(in). Its activity is regulated as follows. Activity is regulated by pH. Active at alkaline pH. Activity is strongly down-regulated below pH 6.5 and a dramatic increase in activity is observed upon increase of the pH from 6.5 to 8.5. In terms of biological role, na(+)/H(+) antiporter that extrudes sodium in exchange for external protons. Plays an important role in the regulation of intracellular pH, cellular Na(+) content and cell volume. Catalyzes the exchange of 2 H(+) per Na(+). This stoichiometry applies at both neutral and alkaline pH values. In addition, can also transport lithium and is involved in lithium detoxification. Binding of the Li(+) and H(+) ligands to NhaA is coupled and antagonistic. In Escherichia coli (strain K12), this protein is Na(+)/H(+) antiporter NhaA.